Reading from the N-terminus, the 327-residue chain is tRNA uridine(34) hydroxylase (327 aa).

A Rhodanese domain is found at 130–224 (LDEDTVVLDT…YGKDPEVQGE (95 aa)). C184 acts as the Cysteine persulfide intermediate in catalysis.

Belongs to the TrhO family.

The catalysed reaction is uridine(34) in tRNA + AH2 + O2 = 5-hydroxyuridine(34) in tRNA + A + H2O. In terms of biological role, catalyzes oxygen-dependent 5-hydroxyuridine (ho5U) modification at position 34 in tRNAs. The sequence is that of tRNA uridine(34) hydroxylase from Streptococcus thermophilus (strain ATCC BAA-250 / LMG 18311).